The following is a 277-amino-acid chain: UPF0496 protein At3g48650 (277 aa).

2 consecutive transmembrane segments (helical) span residues 124-144 (YIFFAAALLSVLALWIYLGAV) and 145-165 (SLVVAAKVVIEVATPSIAPLW).

Belongs to the UPF0496 family.

The protein localises to the membrane. The polypeptide is UPF0496 protein At3g48650 (Arabidopsis thaliana (Mouse-ear cress)).